A 240-amino-acid polypeptide reads, in one-letter code: L-isoleucine-4-hydroxylase (240 aa).

His-159, Asp-161, and His-212 together coordinate Fe cation.

This sequence belongs to the iron/ascorbate-dependent oxidoreductase family. L-ascorbate is required as a cofactor. The cofactor is Fe(2+).

The enzyme catalyses L-isoleucine + 2-oxoglutarate + O2 = (4S)-4-hydroxy-L-isoleucine + succinate + CO2. In terms of biological role, catalyzes the hydroxylation of L-isoleucine to produce (4S)-4-hydroxy-L-isoleucine. Can also catalyze the hydroxylation of L-leucine, L-norvaline, L-norleucine and L-allo-isoleucine, as well as the sulfoxidation of L-methionine, L-ethionine, S-methyl-L-cysteine, S-ethyl-L-cysteine, and S-allyl-L-cysteine. The polypeptide is L-isoleucine-4-hydroxylase (Bacillus thuringiensis).